A 191-amino-acid polypeptide reads, in one-letter code: UPF0301 protein Bphy_2327 (191 aa).

This sequence belongs to the UPF0301 (AlgH) family.

In Paraburkholderia phymatum (strain DSM 17167 / CIP 108236 / LMG 21445 / STM815) (Burkholderia phymatum), this protein is UPF0301 protein Bphy_2327.